The chain runs to 100 residues: Large ribosomal subunit protein uL23 (100 aa).

This sequence belongs to the universal ribosomal protein uL23 family. In terms of assembly, part of the 50S ribosomal subunit. Contacts protein L29, and trigger factor when it is bound to the ribosome.

In terms of biological role, one of the early assembly proteins it binds 23S rRNA. One of the proteins that surrounds the polypeptide exit tunnel on the outside of the ribosome. Forms the main docking site for trigger factor binding to the ribosome. The chain is Large ribosomal subunit protein uL23 from Lactobacillus acidophilus (strain ATCC 700396 / NCK56 / N2 / NCFM).